The primary structure comprises 134 residues: Putative pre-16S rRNA nuclease (134 aa).

Belongs to the YqgF nuclease family.

It is found in the cytoplasm. In terms of biological role, could be a nuclease involved in processing of the 5'-end of pre-16S rRNA. This chain is Putative pre-16S rRNA nuclease, found in Helicobacter pylori (strain J99 / ATCC 700824) (Campylobacter pylori J99).